We begin with the raw amino-acid sequence, 422 residues long: G2/mitotic-specific cyclin-A (422 aa).

A disordered region spans residues 1-29 (MSQPFALHHDGENQMQRRGKMNTRSNGLS).

This sequence belongs to the cyclin family. Cyclin AB subfamily.

In terms of biological role, essential for the control of the cell cycle at the G2/M (mitosis) transition. Interacts with the CDC2 and CDK2 protein kinases to form MPF. G2/M cyclins accumulate steadily during G2 and are abruptly destroyed at mitosis. The protein is G2/mitotic-specific cyclin-A of Spisula solidissima (Atlantic surf-clam).